We begin with the raw amino-acid sequence, 160 residues long: Ureidoglycolate lyase (160 aa).

The protein belongs to the ureidoglycolate lyase family. In terms of assembly, homodimer. Ni(2+) serves as cofactor.

It catalyses the reaction (S)-ureidoglycolate = urea + glyoxylate. It functions in the pathway nitrogen metabolism; (S)-allantoin degradation. In terms of biological role, catalyzes the catabolism of the allantoin degradation intermediate (S)-ureidoglycolate, generating urea and glyoxylate. Involved in the utilization of allantoin as nitrogen source. The chain is Ureidoglycolate lyase from Salmonella agona (strain SL483).